The sequence spans 285 residues: Acetylglutamate kinase (285 aa).

Substrate-binding positions include 64–65 (GG), Arg86, and Asn181.

This sequence belongs to the acetylglutamate kinase family. ArgB subfamily.

It localises to the cytoplasm. The catalysed reaction is N-acetyl-L-glutamate + ATP = N-acetyl-L-glutamyl 5-phosphate + ADP. It functions in the pathway amino-acid biosynthesis; L-arginine biosynthesis; N(2)-acetyl-L-ornithine from L-glutamate: step 2/4. Catalyzes the ATP-dependent phosphorylation of N-acetyl-L-glutamate. The chain is Acetylglutamate kinase from Clostridium beijerinckii (strain ATCC 51743 / NCIMB 8052) (Clostridium acetobutylicum).